Here is a 394-residue protein sequence, read N- to C-terminus: Elongation factor Tu (394 aa).

The tr-type G domain occupies 10-204 (KPHVNIGTIG…AVDSYIPQPV (195 aa)). Positions 19-26 (GHVDHGKT) are G1. GTP is bound at residue 19–26 (GHVDHGKT). Threonine 26 contributes to the Mg(2+) binding site. The segment at 60 to 64 (GITIS) is G2. A G3 region spans residues 81 to 84 (DCPG). Residues 81–85 (DCPGH) and 136–139 (NKVD) each bind GTP. Residues 136–139 (NKVD) form a G4 region. A G5 region spans residues 174-176 (SAL).

The protein belongs to the TRAFAC class translation factor GTPase superfamily. Classic translation factor GTPase family. EF-Tu/EF-1A subfamily. As to quaternary structure, monomer.

It is found in the cytoplasm. It carries out the reaction GTP + H2O = GDP + phosphate + H(+). GTP hydrolase that promotes the GTP-dependent binding of aminoacyl-tRNA to the A-site of ribosomes during protein biosynthesis. This chain is Elongation factor Tu, found in Rickettsia parkeri.